Here is a 249-residue protein sequence, read N- to C-terminus: uncharacterized protein (249 aa).

This is an uncharacterized protein from Colorado tick fever virus (strain USA/Florio N-7180) (CTFV).